The chain runs to 486 residues: E3 ubiquitin-protein ligase TRIM50 (486 aa).

Residues 16 to 57 (CPVCLEVFKEPLMLQCGHSYCKGCLLSLSRHLDSELRCPVCR) form an RING-type zinc finger. The B box-type zinc finger occupies 84 to 125 (PEPQVCTHHRNPLSLFCEKDQELICGLCGLLGSHQHHRVTPV). Zn(2+) is bound by residues Cys-89, His-92, Cys-111, and His-117. 2 coiled-coil regions span residues 125–170 (VSTV…ESDV) and 204–235 (LVAS…FGNE). In terms of domain architecture, B30.2/SPRY spans 275-474 (DIKLTVWKRL…LPMVLPLPSG (200 aa)). Position 372 is an N6-acetyllysine (Lys-372).

The protein belongs to the TRIM/RBCC family. Can form dimers and trimers. Interacts with several E2 ubiquitin-conjugating enzymes, including UBE2L6, UBE2E1, UBE2E3. No interaction with UBE2H. Interacts with BECN1. Interacts with SQSTM1. Interacts with NLRP3. Auto-ubiquitinated. In terms of processing, acetylated by EP300 and KAT2B. HDAC6 drives TRIM50 deacetylation. Acetylation antagonizes with TRIM50 ubiquitination.

The protein resides in the cytoplasm. It carries out the reaction S-ubiquitinyl-[E2 ubiquitin-conjugating enzyme]-L-cysteine + [acceptor protein]-L-lysine = [E2 ubiquitin-conjugating enzyme]-L-cysteine + N(6)-ubiquitinyl-[acceptor protein]-L-lysine.. In terms of biological role, E3 ubiquitin-protein ligase that ubiquitinates Beclin-1/BECN1 in a 'Lys-63'-dependent manner enhancing its binding to ULK1. In turn, promotes starvation-induced autophagy activation. Also interacts with p62/SQSTM1 protein and thereby induces the formation and the autophagy clearance of aggresome-associated polyubiquitinated proteins through HDAC6 interaction. Also promotes NLRP3 inflammasome activation by directly inducing NLRP3 oligomerization independent of its E3 ligase function. The protein is E3 ubiquitin-protein ligase TRIM50 (TRIM50) of Sus scrofa (Pig).